We begin with the raw amino-acid sequence, 129 residues long: Large ribosomal subunit protein uL22 (129 aa).

It belongs to the universal ribosomal protein uL22 family. Part of the 50S ribosomal subunit.

This protein binds specifically to 23S rRNA; its binding is stimulated by other ribosomal proteins, e.g. L4, L17, and L20. It is important during the early stages of 50S assembly. It makes multiple contacts with different domains of the 23S rRNA in the assembled 50S subunit and ribosome. Its function is as follows. The globular domain of the protein is located near the polypeptide exit tunnel on the outside of the subunit, while an extended beta-hairpin is found that lines the wall of the exit tunnel in the center of the 70S ribosome. This chain is Large ribosomal subunit protein uL22, found in Bartonella quintana (strain Toulouse) (Rochalimaea quintana).